The following is a 450-amino-acid chain: Glutathione reductase (450 aa).

Residues S14, G15, E34, T41, C42, K50, and A115 each contribute to the FAD site. Position 14 (S14) interacts with glutathione. A disulfide bridge connects residues C42 and C47. The NADP(+) site is built by A175, I178, E181, R198, R204, and G262. An FAD-binding site is contributed by D303. D309 serves as a coordination point for NADP(+). T311 serves as a coordination point for FAD. R319 is a glutathione binding site. Position 342 (V342) interacts with NADP(+). H439 lines the FAD pocket. H439 acts as the Proton acceptor in catalysis.

The protein belongs to the class-I pyridine nucleotide-disulfide oxidoreductase family. As to quaternary structure, homodimer. FAD serves as cofactor.

The protein localises to the cytoplasm. The catalysed reaction is 2 glutathione + NADP(+) = glutathione disulfide + NADPH + H(+). Its function is as follows. Catalyzes the reduction of glutathione disulfide (GSSG) to reduced glutathione (GSH). Constitutes the major mechanism to maintain a high GSH:GSSG ratio in the cytosol. The polypeptide is Glutathione reductase (gor) (Streptococcus thermophilus).